The following is a 476-amino-acid chain: tRNA(Ile)-lysidine synthase (476 aa).

30–35 (SGGPDS) serves as a coordination point for ATP.

It belongs to the tRNA(Ile)-lysidine synthase family.

It localises to the cytoplasm. It carries out the reaction cytidine(34) in tRNA(Ile2) + L-lysine + ATP = lysidine(34) in tRNA(Ile2) + AMP + diphosphate + H(+). Its function is as follows. Ligates lysine onto the cytidine present at position 34 of the AUA codon-specific tRNA(Ile) that contains the anticodon CAU, in an ATP-dependent manner. Cytidine is converted to lysidine, thus changing the amino acid specificity of the tRNA from methionine to isoleucine. This chain is tRNA(Ile)-lysidine synthase, found in Bacillus anthracis.